A 914-amino-acid chain; its full sequence is Thyroid peroxidase (914 aa).

Positions Met-1 to Gly-31 are cleaved as a signal peptide. Residues Gly-32 to Arg-834 are Extracellular-facing. N-linked (GlcNAc...) asparagine glycosylation occurs at Asn-123. Cys-136 and Cys-152 are oxidised to a cystine. Asp-232 is a heme b binding site. His-233 (proton acceptor) is an active-site residue. Asp-234 is a Ca(2+) binding site. 2 cysteine pairs are disulfide-bonded: Cys-253-Cys-263 and Cys-257-Cys-278. N-linked (GlcNAc...) asparagine glycans are attached at residues Asn-271 and Asn-299. Residues Thr-313, Phe-315, Asp-317, and Ser-319 each contribute to the Ca(2+) site. N-linked (GlcNAc...) asparagine glycosylation is present at Asn-334. Heme b contacts are provided by Glu-387 and His-482. Cystine bridges form between Cys-586/Cys-643, Cys-684/Cys-709, Cys-730/Cys-770, Cys-756/Cys-782, Cys-788/Cys-802, Cys-796/Cys-811, and Cys-813/Cys-826. Asn-603 carries N-linked (GlcNAc...) asparagine glycosylation. A Sushi domain is found at Asp-728–Lys-783. The 44-residue stretch at Asp-784–Ile-827 folds into the EGF-like; calcium-binding domain. The helical transmembrane segment at Ala-835–Cys-859 threads the bilayer. Topologically, residues Arg-860–Glu-914 are cytoplasmic. The segment at Phe-882–Gly-907 is disordered.

This sequence belongs to the peroxidase family. XPO subfamily. Interacts with DUOX1, DUOX2 and CYBA. Requires Ca(2+) as cofactor. Heme b serves as cofactor. Post-translationally, heme is covalently bound through a H(2)O(2)-dependent autocatalytic process. Heme insertion is important for the delivery of protein at the cell surface. In terms of processing, cleaved in its N-terminal part.

The protein localises to the membrane. It catalyses the reaction 2 iodide + H2O2 + 2 H(+) = diiodine + 2 H2O. The enzyme catalyses [thyroglobulin]-L-tyrosine + iodide + H2O2 + H(+) = [thyroglobulin]-3-iodo-L-tyrosine + 2 H2O. It carries out the reaction [thyroglobulin]-3-iodo-L-tyrosine + iodide + H2O2 + H(+) = [thyroglobulin]-3,5-diiodo-L-tyrosine + 2 H2O. The catalysed reaction is 2 [thyroglobulin]-3,5-diiodo-L-tyrosine + H2O2 = [thyroglobulin]-L-thyroxine + [thyroglobulin]-dehydroalanine + 2 H2O. It catalyses the reaction [thyroglobulin]-3-iodo-L-tyrosine + [thyroglobulin]-3,5-diiodo-L-tyrosine + H2O2 = [thyroglobulin]-3,3',5-triiodo-L-thyronine + [thyroglobulin]-dehydroalanine + 2 H2O. It participates in hormone biosynthesis; thyroid hormone biosynthesis. Its function is as follows. Iodination and coupling of the hormonogenic tyrosines in thyroglobulin to yield the thyroid hormones T(3) and T(4). The sequence is that of Thyroid peroxidase (Tpo) from Rattus norvegicus (Rat).